The chain runs to 1596 residues: Transcription factor Zelda (1596 aa).

Disordered stretches follow at residues 1-143 (MTSI…QQQQ), 209-273 (SGLG…GGAA), and 490-530 (TSPA…SVLP). Residues 13 to 24 (AAEALASSSATD) are compositionally biased toward low complexity. Gly residues predominate over residues 25 to 53 (SGGGGAGGGGGGGGGGSGGPGAGGTGGVG). The segment covering 60-72 (NATISAAADSSDN) has biased composition (polar residues). Composition is skewed to low complexity over residues 73 to 123 (QPGT…ITHQ) and 226 to 267 (SAPS…QTPG). Residues 501–518 (GGPGQEGAAGAAPGGGYR) are compositionally biased toward gly residues. The C2H2-type 1 zinc-finger motif lies at 552-576 (YNCTACNKWFTSSGHLKRHYNTTLH). Disordered stretches follow at residues 578–813 (NAVK…TTTA), 825–945 (EDSN…MGML), 1017–1074 (GEQH…MPLT), and 1252–1322 (QMQH…TTLP). The span at 610–634 (RGNAAAAAAAAAAAASASGQGQQQQ) shows a compositional bias: low complexity. A compositionally biased stretch (pro residues) spans 635–653 (PPIPPPPANVPPPEPPRSP). A compositionally biased stretch (gly residues) spans 656-668 (YGGGGGLGVGAMG). The span at 673-682 (SQYSASPSPT) shows a compositional bias: polar residues. 2 stretches are compositionally biased toward low complexity: residues 683–709 (QQQQ…GYGY) and 719–753 (NASP…HHNS). The span at 768–781 (PHNNNTTQMPSSQM) shows a compositional bias: polar residues. Residues 796–813 (TTTRAPQITTTATTTTTA) are compositionally biased toward low complexity. A compositionally biased stretch (basic residues) spans 830–840 (THTHTHTHPNH). Positions 849–858 (SSSSSSSMAT) are enriched in low complexity. Positions 864-877 (QELRDQEQADDHLH) are enriched in basic and acidic residues. A compositionally biased stretch (low complexity) spans 879–916 (HQQASQQYLLSARHYHSSTPNTLSSSNTNPSTPSSNSP). Residues 904–1297 (SNTNPSTPSS…PLAKKRRGGN (394 aa)) form a transactivation activation domain (TAD) region. A compositionally biased stretch (polar residues) spans 921–932 (RQEQQGTDFSRT). The span at 933 to 944 (TPPPQPLPPMGM) shows a compositional bias: pro residues. A compositionally biased stretch (basic and acidic residues) spans 1019–1036 (QHQRQEADHHQQQRELHQ). Low complexity-rich tracts occupy residues 1037 to 1062 (LDQQ…SPTS) and 1252 to 1275 (QMQH…QQQQ). Composition is skewed to polar residues over residues 1276–1286 (ILADQTQTMAQ) and 1309–1322 (SSVG…TTLP). A C2H2-type 2 zinc finger spans residues 1326–1349 (IKCLECDKEFTKNCYLTQHNKSFH). The C2H2-type 3; degenerate zinc finger occupies 1355–1378 (FRCQKCGKRFQSEDVYTTHLGRHR). C2H2-type zinc fingers lie at residues 1384-1407 (HKCE…EAIH) and 1413-1435 (HMCD…LETH).

Zygotically expressed in the developing embryonic germ layers, nervous system, imaginal disk primordia and in larval wing and eye disks. In terms of tissue distribution, detected in the germline cells of the ovary, in unfertilized eggs and throughout early development. Later, it becomes mostly restricted to the nervous system and specific head regions. Also expressed in imaginal wing disks in third instar larvae.

It localises to the nucleus. The protein resides in the chromosome. In terms of biological role, transcription factor required for zygotic genome activation (ZGA), a critical event in early embryonic development during which the developmental control passes from maternally provided mRNAs to the expression of the zygotic genome after fertilization. Binds to regulatory DNA sequences containing a 5'-CAGGTAG-3' sequence motif, which are highly enriched among developmental enhancers. Within 1 hour into development, or by the embryo's 8th nuclear cycle, binds the majority of its motifs genome-wide. Zelda-binding promotes nucleosome depletion and chromatin accessibility, thereby facilitating the binding of patterning transcription factors, including the binding of the dorsoventral patterning transcription factors dorsal (dl) and twist (twi), and the anteroposterior patterning transcription factors bicoid (bcd) and caudal (cad). Promotes the activity of patterning transcription factors, such as bcd and dl, by lowering the concentration threshold required for transcriptional activation. Required both for the earliest (minor) and major waves of transcription during ZGA. Also involved in maternal mRNA clearance during the maternal-to-zygote transition by promoting expression of microRNAs (miRNAs), such as miR-1, miR-9a and miR-309, which mediate degradation of maternally-loaded RNAs. Also involved in post-blastoderm development: nvolved in nervous system development by maintaining neuroblasts in an undifferentiated state and equired for wing disk development. Its function is as follows. Constitutes the main isoform expressed throughout development. Transcription factor required for zygotic genome activation (ZGA). Acts as a dominant negative inhibitor of transcription factor activity of isoform A. The chain is Transcription factor Zelda from Drosophila melanogaster (Fruit fly).